The sequence spans 446 residues: Aspartokinase (446 aa).

An RPE1 insert domain is found at 250–294; the sequence is IPLVKSTYMEESALNTKHSTKIDIPEDASGSTYKLPIELALQNRY.

This sequence belongs to the aspartokinase family.

It catalyses the reaction L-aspartate + ATP = 4-phospho-L-aspartate + ADP. It functions in the pathway amino-acid biosynthesis; L-lysine biosynthesis via DAP pathway; (S)-tetrahydrodipicolinate from L-aspartate: step 1/4. Its pathway is amino-acid biosynthesis; L-methionine biosynthesis via de novo pathway; L-homoserine from L-aspartate: step 1/3. It participates in amino-acid biosynthesis; L-threonine biosynthesis; L-threonine from L-aspartate: step 1/5. The chain is Aspartokinase (lysC) from Rickettsia prowazekii (strain Madrid E).